A 173-amino-acid chain; its full sequence is Membrane protein PM19L (173 aa).

Helical transmembrane passes span 9–29 (IAPL…FASW), 43–63 (GVAG…AGVV), 83–103 (LAAG…AFGL), and 124–144 (FVII…GGLF).

Expressed in roots, leaf blades, leaf sheaths, stems, spikelets and embryos.

The protein localises to the membrane. Its function is as follows. May be involved in abiotic stress response through abscisic acid-dependent signaling. The protein is Membrane protein PM19L of Oryza sativa subsp. japonica (Rice).